A 377-amino-acid polypeptide reads, in one-letter code: Chaperone protein DnaJ (377 aa).

The J domain occupies 5–70 (DYYEVLGVSR…DKKAAYDQFG (66 aa)). The CR-type zinc finger occupies 133–211 (GLTKELRIPT…CHGDGRVEKS (79 aa)). Zn(2+) contacts are provided by C146, C149, C163, C166, C185, C188, C199, and C202. 4 CXXCXGXG motif repeats span residues 146–153 (CDLCEGSG), 163–170 (CGTCHGQG), 185–192 (CPTCHGRG), and 199–206 (CTKCHGDG).

This sequence belongs to the DnaJ family. As to quaternary structure, homodimer. Zn(2+) serves as cofactor.

Its subcellular location is the cytoplasm. Its function is as follows. Participates actively in the response to hyperosmotic and heat shock by preventing the aggregation of stress-denatured proteins and by disaggregating proteins, also in an autonomous, DnaK-independent fashion. Unfolded proteins bind initially to DnaJ; upon interaction with the DnaJ-bound protein, DnaK hydrolyzes its bound ATP, resulting in the formation of a stable complex. GrpE releases ADP from DnaK; ATP binding to DnaK triggers the release of the substrate protein, thus completing the reaction cycle. Several rounds of ATP-dependent interactions between DnaJ, DnaK and GrpE are required for fully efficient folding. Also involved, together with DnaK and GrpE, in the DNA replication of plasmids through activation of initiation proteins. This Shewanella baltica (strain OS223) protein is Chaperone protein DnaJ.